The sequence spans 406 residues: COP9 signalosome complex subunit 4 (406 aa).

Ala2 carries the N-acetylalanine modification. Lys25 is modified (N6-acetyllysine). The PCI domain maps to 197-366; sequence YRRKFIEAAQ…GIVHFETREA (170 aa).

The protein belongs to the CSN4 family. Component of the CSN complex, composed of COPS1/GPS1, COPS2, COPS3, COPS4, COPS5, COPS6, COPS7 (COPS7A or COPS7B), COPS8 and COPS9. In the complex, it probably interacts directly with COPS1, COPS2, COPS3, COPS5, COPS6, COPS7 (COPS7A or COPS7B) and COPS8. Interacts with TOR1A; the interaction is direct and associates TOR1A and SNAPIN with the CSN complex. Interacts with STON2; controls STON2 neddylation levels. Interacts with ERCC6.

It is found in the cytoplasm. The protein resides in the nucleus. Its subcellular location is the cytoplasmic vesicle. It localises to the secretory vesicle. The protein localises to the synaptic vesicle. Functionally, component of the COP9 signalosome complex (CSN), a complex involved in various cellular and developmental processes. The CSN complex is an essential regulator of the ubiquitin (Ubl) conjugation pathway by mediating the deneddylation of the cullin subunits of SCF-type E3 ligase complexes, leading to decrease the Ubl ligase activity of SCF-type complexes such as SCF, CSA or DDB2. Also involved in the deneddylation of non-cullin subunits such as STON2. The complex is also involved in phosphorylation of p53/TP53, c-jun/JUN, IkappaBalpha/NFKBIA, ITPK1, IRF8/ICSBP and SNAPIN, possibly via its association with CK2 and PKD kinases. CSN-dependent phosphorylation of TP53 and JUN promotes and protects degradation by the Ubl system, respectively. This is COP9 signalosome complex subunit 4 (Cops4) from Mus musculus (Mouse).